The following is an 89-amino-acid chain: Cell division protein FtsB (89 aa).

Over 1–3 (MRP) the chain is Cytoplasmic. The chain crosses the membrane as a helical span at residues 4–21 (IIAILIALFILLQYQLWF). Over 22–89 (AAGGIVSVHH…KNEVFYQIVK (68 aa)) the chain is Periplasmic. Residues 29-62 (VHHLNENINHQIMENQKLKDRNTALLADIDDLKH) adopt a coiled-coil conformation.

It belongs to the FtsB family. In terms of assembly, part of a complex composed of FtsB, FtsL and FtsQ.

The protein resides in the cell inner membrane. Functionally, essential cell division protein. May link together the upstream cell division proteins, which are predominantly cytoplasmic, with the downstream cell division proteins, which are predominantly periplasmic. The sequence is that of Cell division protein FtsB from Coxiella burnetii (strain RSA 493 / Nine Mile phase I).